The chain runs to 718 residues: Ribosomal RNA large subunit methyltransferase K/L (718 aa).

The THUMP domain maps to 44-155 (DAYKVCIYSH…KQYVNVFLCL (112 aa)).

This sequence belongs to the methyltransferase superfamily. RlmKL family.

It localises to the cytoplasm. The catalysed reaction is guanosine(2445) in 23S rRNA + S-adenosyl-L-methionine = N(2)-methylguanosine(2445) in 23S rRNA + S-adenosyl-L-homocysteine + H(+). It carries out the reaction guanosine(2069) in 23S rRNA + S-adenosyl-L-methionine = N(2)-methylguanosine(2069) in 23S rRNA + S-adenosyl-L-homocysteine + H(+). Its function is as follows. Specifically methylates the guanine in position 2445 (m2G2445) and the guanine in position 2069 (m7G2069) of 23S rRNA. This is Ribosomal RNA large subunit methyltransferase K/L from Francisella philomiragia subsp. philomiragia (strain ATCC 25017 / CCUG 19701 / FSC 153 / O#319-036).